A 235-amino-acid chain; its full sequence is 7-cyano-7-deazaguanine synthase (235 aa).

An ATP-binding site is contributed by 11 to 21 (FSGGQDSTTCV). Positions 199, 214, 217, and 220 each coordinate Zn(2+).

The protein belongs to the QueC family. Zn(2+) is required as a cofactor.

The catalysed reaction is 7-carboxy-7-deazaguanine + NH4(+) + ATP = 7-cyano-7-deazaguanine + ADP + phosphate + H2O + H(+). It participates in purine metabolism; 7-cyano-7-deazaguanine biosynthesis. Its function is as follows. Catalyzes the ATP-dependent conversion of 7-carboxy-7-deazaguanine (CDG) to 7-cyano-7-deazaguanine (preQ(0)). The protein is 7-cyano-7-deazaguanine synthase of Janthinobacterium sp. (strain Marseille) (Minibacterium massiliensis).